Consider the following 105-residue polypeptide: Host transcription reprogramming factor 7 (105 aa).

An N-terminal signal peptide occupies residues 1–19 (MKTKTIFQLVALFAIGATA). A C2H2-type zinc finger spans residues 69 to 95 (YWCRIGNCNAAFKSLAARCRHEKTAVH).

The protein localises to the secreted. It is found in the host nucleus. In terms of biological role, probable secreted effector that translocates into the nuclei of host cells to reprogram the expression of targeted genes by binding on effector binding elements in rice. This is Host transcription reprogramming factor 7 from Pyricularia oryzae (strain 70-15 / ATCC MYA-4617 / FGSC 8958) (Rice blast fungus).